Reading from the N-terminus, the 394-residue chain is S-adenosylmethionine synthase (394 aa).

Residue H15 coordinates ATP. D17 is a Mg(2+) binding site. K(+) is bound at residue E43. E56 and Q99 together coordinate L-methionine. The flexible loop stretch occupies residues 99–109 (QSPDIALGVNK). ATP is bound by residues 173-175 (DGK), 239-240 (RF), D248, 254-255 (RK), A271, and K275. Residue D248 participates in L-methionine binding. K279 is a binding site for L-methionine.

The protein belongs to the AdoMet synthase family. In terms of assembly, homotetramer; dimer of dimers. The cofactor is Mg(2+). K(+) serves as cofactor.

Its subcellular location is the cytoplasm. The enzyme catalyses L-methionine + ATP + H2O = S-adenosyl-L-methionine + phosphate + diphosphate. It functions in the pathway amino-acid biosynthesis; S-adenosyl-L-methionine biosynthesis; S-adenosyl-L-methionine from L-methionine: step 1/1. Its function is as follows. Catalyzes the formation of S-adenosylmethionine (AdoMet) from methionine and ATP. The overall synthetic reaction is composed of two sequential steps, AdoMet formation and the subsequent tripolyphosphate hydrolysis which occurs prior to release of AdoMet from the enzyme. This chain is S-adenosylmethionine synthase, found in Kosmotoga olearia (strain ATCC BAA-1733 / DSM 21960 / TBF 19.5.1).